The sequence spans 168 residues: Crossover junction endodeoxyribonuclease RuvC (168 aa).

Active-site residues include Asp-10, Glu-70, and Asp-143. 3 residues coordinate Mg(2+): Asp-10, Glu-70, and Asp-143.

Belongs to the RuvC family. Homodimer which binds Holliday junction (HJ) DNA. The HJ becomes 2-fold symmetrical on binding to RuvC with unstacked arms; it has a different conformation from HJ DNA in complex with RuvA. In the full resolvosome a probable DNA-RuvA(4)-RuvB(12)-RuvC(2) complex forms which resolves the HJ. It depends on Mg(2+) as a cofactor.

It localises to the cytoplasm. The enzyme catalyses Endonucleolytic cleavage at a junction such as a reciprocal single-stranded crossover between two homologous DNA duplexes (Holliday junction).. Its function is as follows. The RuvA-RuvB-RuvC complex processes Holliday junction (HJ) DNA during genetic recombination and DNA repair. Endonuclease that resolves HJ intermediates. Cleaves cruciform DNA by making single-stranded nicks across the HJ at symmetrical positions within the homologous arms, yielding a 5'-phosphate and a 3'-hydroxyl group; requires a central core of homology in the junction. The consensus cleavage sequence is 5'-(A/T)TT(C/G)-3'. Cleavage occurs on the 3'-side of the TT dinucleotide at the point of strand exchange. HJ branch migration catalyzed by RuvA-RuvB allows RuvC to scan DNA until it finds its consensus sequence, where it cleaves and resolves the cruciform DNA. The sequence is that of Crossover junction endodeoxyribonuclease RuvC from Roseiflexus sp. (strain RS-1).